The following is a 647-amino-acid chain: Exoribonuclease 2 (647 aa).

An RNB domain is found at 191 to 517 (REDLCALPFV…VNHRLLKALI (327 aa)). The S1 motif domain occupies 563-645 (PTPFNAEIID…DTRSLIARPF (83 aa)).

Belongs to the RNR ribonuclease family. RNase II subfamily.

The protein resides in the cytoplasm. It carries out the reaction Exonucleolytic cleavage in the 3'- to 5'-direction to yield nucleoside 5'-phosphates.. Involved in mRNA degradation. Hydrolyzes single-stranded polyribonucleotides processively in the 3' to 5' direction. The protein is Exoribonuclease 2 of Edwardsiella piscicida.